A 688-amino-acid chain; its full sequence is UvrABC system protein B (688 aa).

Positions 31-188 (GRVNAGEPDV…RKFVSMQYQR (158 aa)) constitute a Helicase ATP-binding domain. 44–51 (GATGTGKS) is a binding site for ATP. The Beta-hairpin signature appears at 97–120 (YYDYYQPEAYVPQTDTFIEKDSSV). Residues 434 to 587 (QIDDLLEQIR…QVAYNTEHGI (154 aa)) form the Helicase C-terminal domain. The disordered stretch occupies residues 607-632 (GEDTKKMLEGRGGGKRSPTPNLRREG). The UVR domain occupies 642-677 (ETIISDLNDQMLQAAGELKFELAARLRDELGDLKRE).

The protein belongs to the UvrB family. In terms of assembly, forms a heterotetramer with UvrA during the search for lesions. Interacts with UvrC in an incision complex.

It is found in the cytoplasm. In terms of biological role, the UvrABC repair system catalyzes the recognition and processing of DNA lesions. A damage recognition complex composed of 2 UvrA and 2 UvrB subunits scans DNA for abnormalities. Upon binding of the UvrA(2)B(2) complex to a putative damaged site, the DNA wraps around one UvrB monomer. DNA wrap is dependent on ATP binding by UvrB and probably causes local melting of the DNA helix, facilitating insertion of UvrB beta-hairpin between the DNA strands. Then UvrB probes one DNA strand for the presence of a lesion. If a lesion is found the UvrA subunits dissociate and the UvrB-DNA preincision complex is formed. This complex is subsequently bound by UvrC and the second UvrB is released. If no lesion is found, the DNA wraps around the other UvrB subunit that will check the other stand for damage. The sequence is that of UvrABC system protein B from Clavibacter michiganensis subsp. michiganensis (strain NCPPB 382).